Reading from the N-terminus, the 163-residue chain is Peptide methionine sulfoxide reductase MsrA (163 aa).

Residue Cys-10 is part of the active site.

The protein belongs to the MsrA Met sulfoxide reductase family.

The enzyme catalyses L-methionyl-[protein] + [thioredoxin]-disulfide + H2O = L-methionyl-(S)-S-oxide-[protein] + [thioredoxin]-dithiol. The catalysed reaction is [thioredoxin]-disulfide + L-methionine + H2O = L-methionine (S)-S-oxide + [thioredoxin]-dithiol. Has an important function as a repair enzyme for proteins that have been inactivated by oxidation. Catalyzes the reversible oxidation-reduction of methionine sulfoxide in proteins to methionine. This chain is Peptide methionine sulfoxide reductase MsrA, found in Vesicomyosocius okutanii subsp. Calyptogena okutanii (strain HA).